A 311-amino-acid chain; its full sequence is Ribosomal RNA large subunit methyltransferase F (311 aa).

The protein belongs to the methyltransferase superfamily. METTL16/RlmF family.

It localises to the cytoplasm. It catalyses the reaction adenosine(1618) in 23S rRNA + S-adenosyl-L-methionine = N(6)-methyladenosine(1618) in 23S rRNA + S-adenosyl-L-homocysteine + H(+). Its function is as follows. Specifically methylates the adenine in position 1618 of 23S rRNA. This is Ribosomal RNA large subunit methyltransferase F from Pectobacterium atrosepticum (strain SCRI 1043 / ATCC BAA-672) (Erwinia carotovora subsp. atroseptica).